The primary structure comprises 220 residues: Aklanonic acid methyltransferase DauC (220 aa).

This sequence belongs to the methyltransferase superfamily. DnrC family. Homodimer.

It catalyses the reaction aklanonate + S-adenosyl-L-methionine = methyl aklanonate + S-adenosyl-L-homocysteine. It participates in antibiotic biosynthesis; daunorubicin biosynthesis. The protein operates within antibiotic biosynthesis; carminomycin biosynthesis. It functions in the pathway antibiotic biosynthesis; rhodomycin biosynthesis. Its pathway is antibiotic biosynthesis; aclacinomycin biosynthesis. In terms of biological role, involved in the biosynthesis of aklavinone which is an important precursor common to the formation of the clinically significant anthracyclines such as carminomycin, daunorubicin (daunomycin), rhodomycin, aclacinomycin T (aklavin) and aclacinomycin A (aclarubicin). These compounds are aromatic polyketide antibiotics that exhibit high cytotoxicity and are widely applied in the chemotherapy of a variety of cancers. Catalyzes the methyl esterification of aklanonic acid to yield aklanonic acid methyl ester. This chain is Aklanonic acid methyltransferase DauC (dauC), found in Streptomyces sp. (strain C5).